Consider the following 354-residue polypeptide: NADH-ubiquinone oxidoreductase chain 2 (354 aa).

10 helical membrane passes run 5–25 (ILMVLIANVVLGTLIVLSSHH), 26–46 (WFTLWVGLEMNTLSILPILSY), 60–80 (FLVQSVSAGIVLNVVIIQAWL), 96–116 (FLMTLALGLKLGLFPCHYWFP), 122–142 (VGFIQGLVLSTWQKIAPFAVL), 149–169 (LNISLLASLGVLSVLVGGWGG), 198–218 (VSVACVMLVAYIIINSSVFFM), 242–262 (AGLVLSILSLGGLPPLFGFLI), 274–294 (GCFILAGVLVMGSLLSLFFYL), and 330–350 (VLLSVSFGISSLGLVCLPVFI).

The protein belongs to the complex I subunit 2 family.

The protein localises to the mitochondrion inner membrane. It catalyses the reaction a ubiquinone + NADH + 5 H(+)(in) = a ubiquinol + NAD(+) + 4 H(+)(out). Core subunit of the mitochondrial membrane respiratory chain NADH dehydrogenase (Complex I) that is believed to belong to the minimal assembly required for catalysis. Complex I functions in the transfer of electrons from NADH to the respiratory chain. The immediate electron acceptor for the enzyme is believed to be ubiquinone. This chain is NADH-ubiquinone oxidoreductase chain 2 (ND2), found in Patiria pectinifera (Starfish).